The primary structure comprises 111 residues: Vacuolar ATPase assembly integral membrane protein VMA21 (111 aa).

The Cytoplasmic portion of the chain corresponds to 1-39; sequence MATRRIVATEKSILEKDDHIGSSPAAGEKSNITPAVPLD. Residues 40-60 form a helical membrane-spanning segment; sequence VILKLLAFTLAMVVIPIGSYF. The Lumenal segment spans residues 61–73; the sequence is VTVNSIFKGNSTY. The chain crosses the membrane as a helical span at residues 74–94; that stretch reads AGALAAIMANVVLVAYVVVAM. At 95–111 the chain is on the cytoplasmic side; it reads NEDQTEQEKAKEGKKDR. The Prevents secretion from ER signature appears at 108–111; the sequence is KKDR.

Belongs to the VMA21 family.

Its subcellular location is the endoplasmic reticulum membrane. The protein localises to the endoplasmic reticulum-Golgi intermediate compartment membrane. It localises to the cytoplasmic vesicle. It is found in the COPII-coated vesicle membrane. In terms of biological role, required for the assembly of the V0 complex of the vacuolar ATPase (V-ATPase) in the endoplasmic reticulum. The chain is Vacuolar ATPase assembly integral membrane protein VMA21 from Pyricularia oryzae (strain 70-15 / ATCC MYA-4617 / FGSC 8958) (Rice blast fungus).